Reading from the N-terminus, the 750-residue chain is Ribosomal RNA large subunit methyltransferase K/L (750 aa).

The 112-residue stretch at 46–157 (TAYRLCLWSR…RGEAILSLDL (112 aa)) folds into the THUMP domain.

Belongs to the methyltransferase superfamily. RlmKL family.

Its subcellular location is the cytoplasm. It catalyses the reaction guanosine(2445) in 23S rRNA + S-adenosyl-L-methionine = N(2)-methylguanosine(2445) in 23S rRNA + S-adenosyl-L-homocysteine + H(+). The catalysed reaction is guanosine(2069) in 23S rRNA + S-adenosyl-L-methionine = N(2)-methylguanosine(2069) in 23S rRNA + S-adenosyl-L-homocysteine + H(+). Functionally, specifically methylates the guanine in position 2445 (m2G2445) and the guanine in position 2069 (m7G2069) of 23S rRNA. The polypeptide is Ribosomal RNA large subunit methyltransferase K/L (Pseudomonas savastanoi pv. phaseolicola (strain 1448A / Race 6) (Pseudomonas syringae pv. phaseolicola (strain 1448A / Race 6))).